A 213-amino-acid polypeptide reads, in one-letter code: Charged multivesicular body protein 2b (213 aa).

Residue Ala2 is modified to N-acetylalanine. A coiled-coil region spans residues 25 to 55 (QRAIIRDRAALEKQEKQLELEIKKMAKIGNK). Low complexity predominate over residues 179-194 (AKAPSAARSLPSASTS). Residues 179-199 (AKAPSAARSLPSASTSKATIS) form a disordered region. A Phosphoserine modification is found at Ser199. The MIT-interacting motif signature appears at 201–211 (EEIERQLKALG).

It belongs to the SNF7 family. In terms of assembly, probable core component of the endosomal sorting required for transport complex III (ESCRT-III). ESCRT-III components are thought to multimerize to form a flat lattice on the perimeter membrane of the endosome. Several assembly forms of ESCRT-III may exist that interact and act sequentially. Interacts with CHMP2A. Interacts with VPS4A. Interacts with VPS4B; the interaction is direct. As to expression, widely expressed. Expressed in brain, heart, skeletal muscle, spleen, kidney, liver, small intestine, pancreas, lung, placenta and leukocytes. In brain, it is expressed in cerebellum, cerebral cortex, medulla, spinal cord, occipital lobe, frontal lobe, temporal lobe and putamen.

Its subcellular location is the cytoplasm. It localises to the cytosol. The protein localises to the late endosome membrane. Its function is as follows. Probable core component of the endosomal sorting required for transport complex III (ESCRT-III) which is involved in multivesicular bodies (MVBs) formation and sorting of endosomal cargo proteins into MVBs. MVBs contain intraluminal vesicles (ILVs) that are generated by invagination and scission from the limiting membrane of the endosome and mostly are delivered to lysosomes enabling degradation of membrane proteins, such as stimulated growth factor receptors, lysosomal enzymes and lipids. The MVB pathway appears to require the sequential function of ESCRT-O, -I,-II and -III complexes. ESCRT-III proteins mostly dissociate from the invaginating membrane before the ILV is released. The ESCRT machinery also functions in topologically equivalent membrane fission events, such as the terminal stages of cytokinesis and the budding of enveloped viruses (HIV-1 and other lentiviruses). ESCRT-III proteins are believed to mediate the necessary vesicle extrusion and/or membrane fission activities, possibly in conjunction with the AAA ATPase VPS4. This is Charged multivesicular body protein 2b (CHMP2B) from Homo sapiens (Human).